The chain runs to 55 residues: uncharacterized protein (55 aa).

This is an uncharacterized protein from Saccharomyces cerevisiae (strain ATCC 204508 / S288c) (Baker's yeast).